A 101-amino-acid chain; its full sequence is Small ribosomal subunit protein bS6 (101 aa).

It belongs to the bacterial ribosomal protein bS6 family. As to quaternary structure, part of the 30S ribosomal subunit. Forms a tight heterodimer with protein bS18.

Located on the outer edge of the platform on the body of the 30S subunit. This is Small ribosomal subunit protein bS6 (rpsF) from Thermus thermophilus (strain ATCC BAA-163 / DSM 7039 / HB27).